The primary structure comprises 715 residues: DNA mismatch repair protein MLH3 (715 aa).

This sequence belongs to the DNA mismatch repair MutL/HexB family. In terms of assembly, heterodimer of MLH1 and MLH3, called MutLbeta, which is involved in correction of a specific subset of IDLs when associated with MutSbeta. Forms a ternary complex with a SGS1-TOP3 heterodimer during meiosis.

It localises to the nucleus. In terms of biological role, involved in DNA mismatch repair (MMR), correcting insertion-deletion loops (IDLs) resulting from DNA replication, DNA damage or from recombination events between non-identical sequences during meiosis. Component of the MutLbeta heterodimer, which probably forms a ternary complex with the MutSbeta heterodimer that initially recognizes the DNA mismatches. This complex is thought to be responsible for directing the downstream MMR events, including strand discrimination, excision, and resynthesis. Plays a major role in promoting meiotic crossing-over and is involved in maintaining the genetic stability of simple sequence repeats by correction of frameshift intermediates. In Saccharomyces cerevisiae (strain ATCC 204508 / S288c) (Baker's yeast), this protein is DNA mismatch repair protein MLH3 (MLH3).